The primary structure comprises 574 residues: Proline--tRNA ligase (574 aa).

It belongs to the class-II aminoacyl-tRNA synthetase family. ProS type 1 subfamily. As to quaternary structure, homodimer.

It localises to the cytoplasm. The enzyme catalyses tRNA(Pro) + L-proline + ATP = L-prolyl-tRNA(Pro) + AMP + diphosphate. In terms of biological role, catalyzes the attachment of proline to tRNA(Pro) in a two-step reaction: proline is first activated by ATP to form Pro-AMP and then transferred to the acceptor end of tRNA(Pro). As ProRS can inadvertently accommodate and process non-cognate amino acids such as alanine and cysteine, to avoid such errors it has two additional distinct editing activities against alanine. One activity is designated as 'pretransfer' editing and involves the tRNA(Pro)-independent hydrolysis of activated Ala-AMP. The other activity is designated 'posttransfer' editing and involves deacylation of mischarged Ala-tRNA(Pro). The misacylated Cys-tRNA(Pro) is not edited by ProRS. The chain is Proline--tRNA ligase from Oleidesulfovibrio alaskensis (strain ATCC BAA-1058 / DSM 17464 / G20) (Desulfovibrio alaskensis).